A 203-amino-acid chain; its full sequence is Ras-related protein Rab-8B (203 aa).

Residues 22-29, 70-74, and 128-131 contribute to the GTP site; these read GDSGVGKS, DTAGQ, and NKCD. Residues C202 and C203 are each lipidated (S-geranylgeranyl cysteine).

This sequence belongs to the small GTPase superfamily. Rab family.

Its subcellular location is the cell membrane. Its function is as follows. Protein transport. Probably involved in vesicular traffic. The sequence is that of Ras-related protein Rab-8B (rab8B) from Dictyostelium discoideum (Social amoeba).